The chain runs to 345 residues: tRNA dimethylallyltransferase (345 aa).

ATP is bound at residue 9-16 (GPTASGKS). 11–16 (TASGKS) contributes to the substrate binding site. 2 interaction with substrate tRNA regions span residues 34–37 (DSMQ) and 195–199 (QRMIR).

It belongs to the IPP transferase family. Monomer. Mg(2+) serves as cofactor.

The catalysed reaction is adenosine(37) in tRNA + dimethylallyl diphosphate = N(6)-dimethylallyladenosine(37) in tRNA + diphosphate. Functionally, catalyzes the transfer of a dimethylallyl group onto the adenine at position 37 in tRNAs that read codons beginning with uridine, leading to the formation of N6-(dimethylallyl)adenosine (i(6)A). This is tRNA dimethylallyltransferase from Orientia tsutsugamushi (strain Boryong) (Rickettsia tsutsugamushi).